Reading from the N-terminus, the 143-residue chain is Transcriptional regulator MraZ (143 aa).

SpoVT-AbrB domains follow at residues 5-47 (TYTP…PREE) and 76-119 (TDEQ…DAQA).

The protein belongs to the MraZ family. In terms of assembly, forms oligomers.

It localises to the cytoplasm. Its subcellular location is the nucleoid. This Rhodococcus jostii (strain RHA1) protein is Transcriptional regulator MraZ.